The primary structure comprises 858 residues: Alanine--tRNA ligase (858 aa).

Residues histidine 550, histidine 554, cysteine 652, and histidine 656 each coordinate Zn(2+).

Belongs to the class-II aminoacyl-tRNA synthetase family. Zn(2+) serves as cofactor.

Its subcellular location is the cytoplasm. The enzyme catalyses tRNA(Ala) + L-alanine + ATP = L-alanyl-tRNA(Ala) + AMP + diphosphate. In terms of biological role, catalyzes the attachment of alanine to tRNA(Ala) in a two-step reaction: alanine is first activated by ATP to form Ala-AMP and then transferred to the acceptor end of tRNA(Ala). Also edits incorrectly charged Ser-tRNA(Ala) and Gly-tRNA(Ala) via its editing domain. This is Alanine--tRNA ligase from Pseudothermotoga lettingae (strain ATCC BAA-301 / DSM 14385 / NBRC 107922 / TMO) (Thermotoga lettingae).